We begin with the raw amino-acid sequence, 179 residues long: Ribulose bisphosphate carboxylase small subunit, chloroplastic 3 (179 aa).

A chloroplast-targeting transit peptide spans 1-58 (MASSATMLSSVATAARAAPAQASMVAPFVGLKSASAFPVTQKPATGLSTLPSNGGRVQ).

This sequence belongs to the RuBisCO small chain family. Heterohexadecamer of 8 large and 8 small subunits.

It is found in the plastid. The protein localises to the chloroplast. Functionally, ruBisCO catalyzes two reactions: the carboxylation of D-ribulose 1,5-bisphosphate, the primary event in carbon dioxide fixation, as well as the oxidative fragmentation of the pentose substrate. Both reactions occur simultaneously and in competition at the same active site. Although the small subunit is not catalytic it is essential for maximal activity. The sequence is that of Ribulose bisphosphate carboxylase small subunit, chloroplastic 3 from Fritillaria agrestis (Stinkbells).